The following is an 86-amino-acid chain: Small ribosomal subunit protein bS16 (86 aa).

The protein belongs to the bacterial ribosomal protein bS16 family.

This chain is Small ribosomal subunit protein bS16, found in Borrelia garinii subsp. bavariensis (strain ATCC BAA-2496 / DSM 23469 / PBi) (Borreliella bavariensis).